The primary structure comprises 345 residues: Anthranilate phosphoribosyltransferase (345 aa).

5-phospho-alpha-D-ribose 1-diphosphate is bound by residues G79, 82–83 (GD), T87, 89–92 (NVST), 106–114 (KHGNRAVSG), and S118. G79 contributes to the anthranilate binding site. S91 is a Mg(2+) binding site. N109 serves as a coordination point for anthranilate. An anthranilate-binding site is contributed by R164. The Mg(2+) site is built by D223 and E224.

The protein belongs to the anthranilate phosphoribosyltransferase family. As to quaternary structure, homodimer. It depends on Mg(2+) as a cofactor.

It carries out the reaction N-(5-phospho-beta-D-ribosyl)anthranilate + diphosphate = 5-phospho-alpha-D-ribose 1-diphosphate + anthranilate. It participates in amino-acid biosynthesis; L-tryptophan biosynthesis; L-tryptophan from chorismate: step 2/5. Its function is as follows. Catalyzes the transfer of the phosphoribosyl group of 5-phosphorylribose-1-pyrophosphate (PRPP) to anthranilate to yield N-(5'-phosphoribosyl)-anthranilate (PRA). The chain is Anthranilate phosphoribosyltransferase from Sulfurisphaera tokodaii (strain DSM 16993 / JCM 10545 / NBRC 100140 / 7) (Sulfolobus tokodaii).